We begin with the raw amino-acid sequence, 400 residues long: PHD finger protein 24 (400 aa).

Gly2 is lipidated: N-myristoyl glycine. Residues 29–38 are compositionally biased toward basic and acidic residues; it reads RDRPSIRRGG. The disordered stretch occupies residues 29–65; the sequence is RDRPSIRRGGELPGSRRGTVEGSVQEVQEEKEAEASA. Arg36 is subject to Omega-N-methylarginine. Ser43 carries the post-translational modification Phosphoserine. A Phosphothreonine modification is found at Thr47. Ser51 is modified (phosphoserine). The PHD-type zinc finger occupies 129-190; sequence NDEMCDVCEV…TGWSCYYCDN (62 aa). Arg307 is modified (omega-N-methylarginine).

The protein is PHD finger protein 24 of Mus musculus (Mouse).